The sequence spans 436 residues: Acetyl-CoA decarbonylase/synthase complex subunit delta 1 (436 aa).

This sequence belongs to the CdhD family. As to quaternary structure, heterodimer of delta and gamma chains. The ACDS complex is made up of alpha, epsilon, beta, gamma and delta chains with a probable stoichiometry of (alpha(2)epsilon(2))(4)-beta(8)-(gamma(1)delta(1))(8) (Potential).

The protein operates within one-carbon metabolism; methanogenesis from acetate. Part of a complex that catalyzes the reversible cleavage of acetyl-CoA, allowing growth on acetate as sole source of carbon and energy. Probably maintains the overall quaternary structure of the ACDS complex. This Methanosarcina thermophila protein is Acetyl-CoA decarbonylase/synthase complex subunit delta 1 (cdhD1).